Consider the following 409-residue polypeptide: MDKLLERFLHYVSLDTQSKSGVRQVPSTEGQWKLLRLLKQQLEEMGLVNITLSEKGTLMATLPANVEGDIPAIGFISHVDTSPDFSGKNVNPQIVENYRGGDIALGIGDEVLSPVMFPVLHQLLGQTLITTDGKTLLGADDKAGVAEIMTALAVLKGNPIPHGDIKVAFTPDEEVGKGAKHFDVEEFGAQWAYTVDGGGVGELEFENFNAASVNIKIVGNNVHPGTAKGVMVNALSLAARIHAEVPADEAPETTEGYEGFYHLASMKGTVDRAEMHYIIRDFDRKQFEARKRKMMEIAKKVGKGLHPDCYIELVIEDSYYNMREKVVEHPHILDIAQQAMRDCHITPEMKPIRGGTDGAQLSFMGLPCPNLFTGGYNYHGKHEFVTLEGMEKAVQVIVRIAELTAKRGQ.

Position 78 (H78) interacts with Zn(2+). The active site involves D80. D140 is a Zn(2+) binding site. The active-site Proton acceptor is E173. Residues E174, D196, and H379 each contribute to the Zn(2+) site.

It belongs to the peptidase M20B family. It depends on Zn(2+) as a cofactor.

The protein resides in the cytoplasm. It carries out the reaction Release of the N-terminal residue from a tripeptide.. In terms of biological role, cleaves the N-terminal amino acid of tripeptides. The protein is Peptidase T of Salmonella agona (strain SL483).